We begin with the raw amino-acid sequence, 672 residues long: APC membrane recruitment protein 2 (672 aa).

The segment covering 1–21 (METGRSRGGGAAVSERGGGAR) has biased composition (gly residues). Disordered stretches follow at residues 1–23 (METG…ARAG), 74–360 (TMPS…DPSA), and 443–560 (MLSQ…DALC). Low complexity predominate over residues 142–158 (GSLASSSVAKSHSFFSL). Residue Ser-154 is modified to Phosphoserine. Basic and acidic residues-rich tracts occupy residues 163-175 (GRSE…HAEA) and 201-210 (RGKEEEEKAV). 3 positions are modified to phosphoserine: Ser-223, Ser-227, and Ser-244. The segment covering 230–254 (CVKEEPPRAARRPDSPGQDASRHAA) has biased composition (basic and acidic residues). Low complexity predominate over residues 255–269 (GEPAGGEQAPASAES). A Phosphoserine modification is found at Ser-284. A compositionally biased stretch (basic and acidic residues) spans 289 to 303 (SRGEDAEGHRREEKP). Over residues 343 to 354 (ASAVPDPSSVDP) the composition is skewed to low complexity. A phosphoserine mark is found at Ser-356 and Ser-359. A compositionally biased stretch (low complexity) spans 446–457 (QTEDQGQGTQEG). 2 stretches are compositionally biased toward basic and acidic residues: residues 478 to 488 (RCGEAAKDMSS) and 502 to 516 (QQKE…EHQE).

This sequence belongs to the Amer family. As to quaternary structure, interacts with APC.

The protein localises to the cell membrane. Its function is as follows. Negative regulator of the canonical Wnt signaling pathway involved in neuroectodermal patterning. Acts by specifically binding phosphatidylinositol 4,5-bisphosphate (PtdIns(4,5)P2), translocating to the cell membrane and interacting with key regulators of the canonical Wnt signaling pathway, such as components of the beta-catenin destruction complex. The sequence is that of APC membrane recruitment protein 2 (Amer2) from Mus musculus (Mouse).